The chain runs to 118 residues: Ribonuclease P protein component (118 aa).

This sequence belongs to the RnpA family. Consists of a catalytic RNA component (M1 or rnpB) and a protein subunit.

It catalyses the reaction Endonucleolytic cleavage of RNA, removing 5'-extranucleotides from tRNA precursor.. Functionally, RNaseP catalyzes the removal of the 5'-leader sequence from pre-tRNA to produce the mature 5'-terminus. It can also cleave other RNA substrates such as 4.5S RNA. The protein component plays an auxiliary but essential role in vivo by binding to the 5'-leader sequence and broadening the substrate specificity of the ribozyme. This chain is Ribonuclease P protein component, found in Vibrio parahaemolyticus serotype O3:K6 (strain RIMD 2210633).